The primary structure comprises 99 residues: UPF0213 protein spr1390 (99 aa).

The region spanning 3 to 78 is the GIY-YIG domain; it reads HKAYMYVLEC…KRKKRPQKEE (76 aa).

Belongs to the UPF0213 family.

This Streptococcus pneumoniae (strain ATCC BAA-255 / R6) protein is UPF0213 protein spr1390.